A 57-amino-acid chain; its full sequence is UPF0509 protein YciZ (57 aa).

Belongs to the UPF0509 family.

The chain is UPF0509 protein YciZ (yciZ) from Shigella flexneri.